The primary structure comprises 579 residues: Membrane frizzled-related protein (579 aa).

The Cytoplasmic portion of the chain corresponds to 1–69 (MKDFSDVILC…RPDCRFSWLC (69 aa)). The chain crosses the membrane as a helical; Signal-anchor for type II membrane protein span at residues 70–90 (VLLLSSLLLLLLGLLVAIILA). At 91–579 (QLQAAPPSGA…AADLEACAQP (489 aa)) the chain is on the extracellular side. The interval 100-143 (ASHSPLPAGGLTTTTTTPTITTSQAAGTPKGQQESGVSPSPQST) is disordered. Low complexity predominate over residues 111 to 121 (TTTTTTPTITT). The segment covering 122–143 (SQAAGTPKGQQESGVSPSPQST) has biased composition (polar residues). Cystine bridges form between cysteine 144–cysteine 170 and cysteine 197–cysteine 216. Positions 144 to 253 (CGGLLSGPRG…FGFHAWYQAM (110 aa)) constitute a CUB 1 domain. Asparagine 227 is a glycosylation site (N-linked (GlcNAc...) asparagine). In terms of domain architecture, LDL-receptor class A 1 spans 259 to 295 (SCAHDEFRCDQLICLLPDSVCDGFANCADGSDETNCS). Intrachain disulfides connect cysteine 260-cysteine 272, cysteine 267-cysteine 285, cysteine 279-cysteine 294, cysteine 301-cysteine 327, and cysteine 354-cysteine 377. One can recognise a CUB 2 domain in the interval 301–414 (CGGNLTGLQG…GGFSATYLAF (114 aa)). Asparagine 415 carries N-linked (GlcNAc...) asparagine glycosylation. An LDL-receptor class A 2 domain is found at 420 to 455 (PCGPSELSCQAGGCKGVQWMCDMWRDCTDGSDDNCS). Disulfide bonds link cysteine 421-cysteine 433, cysteine 428-cysteine 446, cysteine 440-cysteine 454, cysteine 466-cysteine 528, cysteine 474-cysteine 521, cysteine 512-cysteine 549, cysteine 538-cysteine 576, and cysteine 542-cysteine 564. Residues 461 to 579 (PPELACEPVQ…AADLEACAQP (119 aa)) enclose the FZ domain.

In terms of assembly, interacts with C1QTNF5. In terms of tissue distribution, specifically expressed in brain. Strongly expressed in medulla oblongata and to a lower extent in hippocampus and corpus callosum. Expressed in keratinocytes.

It localises to the apical cell membrane. In terms of biological role, may play a role in eye development. This is Membrane frizzled-related protein (MFRP) from Homo sapiens (Human).